Consider the following 867-residue polypeptide: Glutamate receptor 1.2 (867 aa).

The N-terminal stretch at 1 to 27 is a signal peptide; that stretch reads MVRICIQTPILLSFLLVLLFFISNCFA. The Extracellular segment spans residues 28-560; the sequence is SSQNNDDDKR…SMWVFFQPLT (533 aa). N-linked (GlcNAc...) asparagine glycosylation is found at Asn301, Asn400, Asn496, and Asn499. The chain crosses the membrane as a helical span at residues 561-581; sequence PNLWITSAAFFVLTGIIVWLI. Residues 582-590 are Cytoplasmic-facing; it reads ERAENKEFQ. Residues 591 to 611 traverse the membrane as a helical segment; the sequence is GSWPQQIGVVIWFGFSTLVYA. The Cytoplasmic segment spans residues 612 to 622; sequence HREKLQHNLSR. The chain crosses the membrane as a helical span at residues 623–643; it reads FVVTVWVFAVLILVTSYTATL. The Extracellular segment spans residues 644–792; that stretch reads TSMMTVQQIR…NPITLYRFRG (149 aa). Asn676, Asn688, Asn699, and Asn748 each carry an N-linked (GlcNAc...) asparagine glycan. The chain crosses the membrane as a helical span at residues 793-813; sequence LFMITGVSFAFALAVLLILWL. The Cytoplasmic portion of the chain corresponds to 814-867; sequence RERWEILVNSVNIYFSQRLRHFRILFTRTIHPSPLGLDNPIGENAVQMAQRNRR.

It belongs to the glutamate-gated ion channel (TC 1.A.10.1) family. As to quaternary structure, may form heteromers. In terms of tissue distribution, expressed predominantly in roots and siliques.

The protein localises to the membrane. In terms of biological role, glutamate-gated receptor that probably acts as a non-selective cation channel. May be involved in light-signal transduction and calcium homeostasis via the regulation of calcium influx into cells. This chain is Glutamate receptor 1.2 (GLR1.2), found in Arabidopsis thaliana (Mouse-ear cress).